The primary structure comprises 1544 residues: Rho guanine nucleotide exchange factor 12 (1544 aa).

Positions 1–62 are disordered; sequence MSGTQSTITD…KTKSSSEESR (62 aa). An N-acetylserine modification is found at serine 2. Residues 28–45 are compositionally biased toward basic and acidic residues; the sequence is SPTDKKQKVERIASHDFD. Residue serine 41 is modified to Phosphoserine. The region spanning 72-151 is the PDZ domain; it reads CVIIQKDDNG…LTVQGRPPGS (80 aa). A coiled-coil region spans residues 194–262; the sequence is MGEENNVVHN…LSKATGSAQD (69 aa). The interval 247-346 is disordered; sequence PQLQEQLSKA…SLVGSPSTRI (100 aa). Composition is skewed to polar residues over residues 249 to 260 and 293 to 309; these read LQEQLSKATGSA and DCSS…NADS. Serine 309 is subject to Phosphoserine. The segment covering 313 to 329 has biased composition (basic and acidic residues); it reads GPKERIYLEENPEKSET. Positions 330 to 344 are enriched in polar residues; the sequence is IQDTDTQSLVGSPST. Serine 341 is subject to Phosphoserine. Positions 367-558 constitute an RGSL domain; it reads GQCSCFQSIE…LMYMKHLGVK (192 aa). The disordered stretch occupies residues 570-706; sequence GRIGFLPKIK…GDTLDGTPRT (137 aa). Over residues 582-592 the composition is skewed to basic and acidic residues; that stretch reads MKKDKEGEEKG. Residues 631-640 show a composition bias toward polar residues; the sequence is STPSSVSPEP. Phosphoserine is present on serine 637. Residues 663–676 are compositionally biased toward low complexity; the sequence is ANSMSSVASGASFS. Threonine 736 carries the post-translational modification Phosphothreonine. One can recognise a DH domain in the interval 787 to 977; it reads KRQEVINELF…RQILNYVNQA (191 aa). Residues 1019–1132 enclose the PH domain; sequence KMIHEGPLVW…WQDLICRMAA (114 aa). Residues 1138-1149 are compositionally biased toward polar residues; it reads STKPIPLPQSTP. The tract at residues 1138–1179 is disordered; sequence STKPIPLPQSTPGEGDNDEEDPSKLKEEQHGISVTGLQSPDR. Serine 1288, serine 1327, serine 1377, serine 1457, and serine 1541 each carry phosphoserine.

Interacts with GNA12 and GNA13, probably through the RGS-like domain. Interacts with RHOA, PLXNB1 and PLXNB2. Interacts through its PDZ domain with IGF1R beta subunit. Interacts with GCSAM. Found in a complex with ARHGEF11 and ARHGEF12; binding to ARHGEF11 and ARHGEF12 enhances CDC42 GEF activity of PLEKHG4B, and PLEKHG4B, in turn, inhibits ARHGEF11- and ARHGEF12-mediated RHOA activation. Ubiquitously expressed. Isoform 2 is found in jejunum and testis.

Its subcellular location is the cytoplasm. It localises to the membrane. May play a role in the regulation of RhoA GTPase by guanine nucleotide-binding alpha-12 (GNA12) and alpha-13 (GNA13). Acts as guanine nucleotide exchange factor (GEF) for RhoA GTPase and may act as GTPase-activating protein (GAP) for GNA12 and GNA13. In Homo sapiens (Human), this protein is Rho guanine nucleotide exchange factor 12 (ARHGEF12).